Here is a 368-residue protein sequence, read N- to C-terminus: Glutamine synthetase root isozyme 2 (368 aa).

The GS beta-grasp domain occupies 19-99; the sequence is IIAEYIWVGG…VMCDCYEPNG (81 aa). The disordered stretch occupies residues 38-66; it reads RTLSGPVDDPSKLPKWNFDGSSTGQAPGD. The 263-residue stretch at 106 to 368 folds into the GS catalytic domain; the sequence is KRHGAAKIFS…NGDGKGAAAP (263 aa).

This sequence belongs to the glutamine synthetase family. Homooctamer. In terms of tissue distribution, found mainly in the vascular tissues of seedling roots.

Its subcellular location is the cytoplasm. It catalyses the reaction L-glutamate + NH4(+) + ATP = L-glutamine + ADP + phosphate + H(+). In terms of biological role, plays a role in the flow of nitrogen into nitrogenous organic compounds. The chain is Glutamine synthetase root isozyme 2 (GLN2) from Zea mays (Maize).